The chain runs to 457 residues: MSGTRASNDRPPSAGGVKRGRLQHEAATTGSRVTVVLGAQWGDEGKGKVVDLLATDADIISRCQGGNNAGHTVVVDGKEYDFHLLPSGIINTKAVSFIGNGVVVHLPGLFEEAEKNEKKGLKDWEKRLIISDRAHLVFDFHQAVDGLQEVQRQAQEGKNIGTTRKGIGPAYSSKAARAGLRVCDLLSDFDEFSARFRNLARQHQSMFPTLETDVEGQLKKLKGFAERIRPMVRDGVYFMYEALHGPPKKILVEGANAALLDIGFGTCPFVTSSNCTVGGVCTGLGIPPQNIGEVYGVVKAYTTRVGVGAFPTEQINETGDLLQSRGHEWGVTTGRKRRCGWLDLMILRYAHMINGFTALALTKLDILDTLDEVKVGVSYKLSGKRIPYFPANQEILQKVEVEYETLPGWKTDTTGARKWEDLPPQAQSYIRFVENHVGVAVKWVGVGKSRDSMIQLF.

The tract at residues 1–25 (MSGTRASNDRPPSAGGVKRGRLQHE) is disordered. GTP contacts are provided by residues 42 to 48 (GDEGKGK) and 70 to 72 (GHT). Aspartate 43 functions as the Proton acceptor in the catalytic mechanism. 2 residues coordinate Mg(2+): aspartate 43 and glycine 70. Aspartate 43 provides a ligand contact to substrate. Residues 43–46 (DEGK), 68–71 (NAGH), threonine 163, arginine 177, asparagine 256, threonine 271, and arginine 335 each bind IMP. Histidine 71 acts as the Proton donor in catalysis. 331 to 337 (VTTGRKR) is a binding site for substrate. Residues arginine 337, 363–365 (KLD), and 445–448 (GVGK) each bind GTP.

Belongs to the adenylosuccinate synthetase family. In terms of assembly, homodimer. It depends on Mg(2+) as a cofactor. As to expression, predominantly expressed in the striated muscle tissues.

The protein resides in the cytoplasm. It carries out the reaction IMP + L-aspartate + GTP = N(6)-(1,2-dicarboxyethyl)-AMP + GDP + phosphate + 2 H(+). It functions in the pathway purine metabolism; AMP biosynthesis via de novo pathway; AMP from IMP: step 1/2. In terms of biological role, component of the purine nucleotide cycle (PNC), which interconverts IMP and AMP to regulate the nucleotide levels in various tissues, and which contributes to glycolysis and ammoniagenesis. Catalyzes the first committed step in the biosynthesis of AMP from IMP. In Sus scrofa (Pig), this protein is Adenylosuccinate synthetase isozyme 1.